A 405-amino-acid polypeptide reads, in one-letter code: Riboflavin biosynthesis protein RibBA (405 aa).

Residues 1 to 205 form a DHBP synthase region; the sequence is MSEIQLNTIE…IKDLIAYRLR (205 aa). Residues 30–31, Asp35, 144–148, and Glu168 contribute to the D-ribulose 5-phosphate site; these read RE and RAGHT. Glu31 contributes to the Mg(2+) binding site. His147 is a binding site for Mg(2+). The segment at 206–405 is GTP cyclohydrolase II; it reads TESIVENGVE…RMGHVLHNIK (200 aa). Residue 256 to 260 participates in GTP binding; it reads RVHSS. Cys261, Cys272, and Cys274 together coordinate Zn(2+). Residues Gln277, 299 to 301, and Thr321 contribute to the GTP site; that span reads EGR. Catalysis depends on Asp333, which acts as the Proton acceptor; for GTP cyclohydrolase activity. Catalysis depends on Arg335, which acts as the Nucleophile; for GTP cyclohydrolase activity. GTP contacts are provided by Ser356 and Lys361.

It in the N-terminal section; belongs to the DHBP synthase family. The protein in the C-terminal section; belongs to the GTP cyclohydrolase II family. It depends on Mg(2+) as a cofactor. Requires Mn(2+) as cofactor. Zn(2+) is required as a cofactor.

The enzyme catalyses D-ribulose 5-phosphate = (2S)-2-hydroxy-3-oxobutyl phosphate + formate + H(+). It catalyses the reaction GTP + 4 H2O = 2,5-diamino-6-hydroxy-4-(5-phosphoribosylamino)-pyrimidine + formate + 2 phosphate + 3 H(+). The protein operates within cofactor biosynthesis; riboflavin biosynthesis; 2-hydroxy-3-oxobutyl phosphate from D-ribulose 5-phosphate: step 1/1. It functions in the pathway cofactor biosynthesis; riboflavin biosynthesis; 5-amino-6-(D-ribitylamino)uracil from GTP: step 1/4. Catalyzes the conversion of D-ribulose 5-phosphate to formate and 3,4-dihydroxy-2-butanone 4-phosphate. Functionally, catalyzes the conversion of GTP to 2,5-diamino-6-ribosylamino-4(3H)-pyrimidinone 5'-phosphate (DARP), formate and pyrophosphate. This chain is Riboflavin biosynthesis protein RibBA, found in Parabacteroides distasonis (strain ATCC 8503 / DSM 20701 / CIP 104284 / JCM 5825 / NCTC 11152).